The primary structure comprises 229 residues: Potassium/proton antiporter CemA (229 aa).

A run of 3 helical transmembrane segments spans residues 7 to 27 (FTPL…SFSV), 107 to 127 (ILHF…SILG), and 189 to 209 (IISG…KYWI).

The protein belongs to the CemA family.

It is found in the plastid. Its subcellular location is the chloroplast inner membrane. It carries out the reaction K(+)(in) + H(+)(out) = K(+)(out) + H(+)(in). Contributes to K(+)/H(+) antiport activity by supporting proton efflux to control proton extrusion and homeostasis in chloroplasts in a light-dependent manner to modulate photosynthesis. Prevents excessive induction of non-photochemical quenching (NPQ) under continuous-light conditions. Indirectly promotes efficient inorganic carbon uptake into chloroplasts. In Nicotiana tomentosiformis (Tobacco), this protein is Potassium/proton antiporter CemA.